A 1396-amino-acid polypeptide reads, in one-letter code: Sterol 3-beta-glucosyltransferase (1396 aa).

Positions 1 to 16 (MRPLLDEAKRRVDRRL) are enriched in basic and acidic residues. Disordered stretches follow at residues 1–59 (MRPL…TKEG), 82–193 (HARF…AAPV), and 206–233 (SKGSMNQSPRSPPAETQEEQSQEQTSAS). Positions 18–28 (ASRQSLSTSRI) are enriched in polar residues. 2 stretches are compositionally biased toward basic and acidic residues: residues 35–44 (ERLKDDHDAQ) and 82–108 (HARFDDSSDSERDTDRPPQKRTEKESQ). Polar residues predominate over residues 156–175 (GSSQRQGGAQTEPSTGNQMS). Residues 237 to 288 (LRLMEMFGFESPEKVLVEYACSLVQSMLLQGYMYVTEGHICFYAYLPRKSTV) form the GRAM 1 domain. One can recognise a PH domain in the interval 289–387 (AIKSGYLYKR…WVKSLQKVIF (99 aa)). Polar residues-rich tracts occupy residues 459-479 (QAKNPSRESPQPGRTTPQSRA) and 487-497 (SLTSGLSQVLG). Disordered stretches follow at residues 459–531 (QAKN…RDLS) and 576–635 (FRRQ…VQQS). Basic and acidic residues predominate over residues 585-595 (QFGRRHSDETA). Residues 719–785 (DRFRAHFALP…KDVENVEKEK (67 aa)) enclose the GRAM 2 domain. A disordered region spans residues 841 to 880 (EQDESEAAKAEHRMLQEARKDASGGLIPQTPSDESPEIHP). The span at 846-862 (EAAKAEHRMLQEARKDA) shows a compositional bias: basic and acidic residues. Residues S907, R908, D910, A1210, H1212, H1225, G1229, T1230, D1249, and Q1250 each coordinate UDP-alpha-D-glucose.

It belongs to the glycosyltransferase 28 family.

It is found in the cytoplasm. Its subcellular location is the preautophagosomal structure membrane. The enzyme catalyses a sterol + UDP-alpha-D-glucose = a sterol 3-beta-D-glucoside + UDP + H(+). It carries out the reaction ergosterol + UDP-alpha-D-glucose = ergosteryl 3-beta-D-glucoside + UDP + H(+). Functionally, sterol glycosyltransferase responsible for the glycosylation of ergosterol to form ergosterol-glucoside. In Aspergillus terreus (strain NIH 2624 / FGSC A1156), this protein is Sterol 3-beta-glucosyltransferase.